The chain runs to 252 residues: Petrobactin import ATP-binding protein YclP (252 aa).

The ABC transporter domain occupies 2–236 (VEVRNVSKQY…SVLEEIYDMT (235 aa)). 34 to 41 (GPNGAGKS) provides a ligand contact to ATP.

This sequence belongs to the ABC transporter superfamily. The complex is composed of two ATP-binding proteins (YclP), two transmembrane proteins (YclN and YclO) and a solute-binding protein (YclQ).

Its subcellular location is the cell membrane. The enzyme catalyses a Fe(III)-siderophore(out) + ATP + H2O = a Fe(III)-siderophore(in) + ADP + phosphate + H(+). Its function is as follows. Part of the ABC transporter complex YclNOPQ involved in uptake of ferric-petrobactin. Petrobactin is a photoreactive 3,4-catecholate siderophore produced by many members of the B.cereus group, including B.anthracis. Probably responsible for energy coupling to the transport system. This Bacillus subtilis (strain 168) protein is Petrobactin import ATP-binding protein YclP (yclP).